A 227-amino-acid polypeptide reads, in one-letter code: Cytochrome c oxidase subunit 2 (227 aa).

Residues 1–14 (MAYPMQLGLQDATS) lie on the Mitochondrial intermembrane side of the membrane. Residues 15 to 45 (PIMEELMNFHDHTLMIVFLISSLVLYLISLM) form a helical membrane-spanning segment. Residues 46-59 (LTTKLIHTNTMDAQ) are Mitochondrial matrix-facing. A helical membrane pass occupies residues 60–87 (EVETIWTILPAIILVLIALPSLRILYMM). Residues 88 to 227 (DEINNPVLTV…FFENWSSSMT (140 aa)) lie on the Mitochondrial intermembrane side of the membrane. 6 residues coordinate Cu cation: histidine 161, cysteine 196, glutamate 198, cysteine 200, histidine 204, and methionine 207. A Mg(2+)-binding site is contributed by glutamate 198.

The protein belongs to the cytochrome c oxidase subunit 2 family. In terms of assembly, component of the cytochrome c oxidase (complex IV, CIV), a multisubunit enzyme composed of 14 subunits. The complex is composed of a catalytic core of 3 subunits MT-CO1, MT-CO2 and MT-CO3, encoded in the mitochondrial DNA, and 11 supernumerary subunits COX4I, COX5A, COX5B, COX6A, COX6B, COX6C, COX7A, COX7B, COX7C, COX8 and NDUFA4, which are encoded in the nuclear genome. The complex exists as a monomer or a dimer and forms supercomplexes (SCs) in the inner mitochondrial membrane with NADH-ubiquinone oxidoreductase (complex I, CI) and ubiquinol-cytochrome c oxidoreductase (cytochrome b-c1 complex, complex III, CIII), resulting in different assemblies (supercomplex SCI(1)III(2)IV(1) and megacomplex MCI(2)III(2)IV(2)). Found in a complex with TMEM177, COA6, COX18, COX20, SCO1 and SCO2. Interacts with TMEM177 in a COX20-dependent manner. Interacts with COX20. Interacts with COX16. Cu cation serves as cofactor.

It is found in the mitochondrion inner membrane. It carries out the reaction 4 Fe(II)-[cytochrome c] + O2 + 8 H(+)(in) = 4 Fe(III)-[cytochrome c] + 2 H2O + 4 H(+)(out). Component of the cytochrome c oxidase, the last enzyme in the mitochondrial electron transport chain which drives oxidative phosphorylation. The respiratory chain contains 3 multisubunit complexes succinate dehydrogenase (complex II, CII), ubiquinol-cytochrome c oxidoreductase (cytochrome b-c1 complex, complex III, CIII) and cytochrome c oxidase (complex IV, CIV), that cooperate to transfer electrons derived from NADH and succinate to molecular oxygen, creating an electrochemical gradient over the inner membrane that drives transmembrane transport and the ATP synthase. Cytochrome c oxidase is the component of the respiratory chain that catalyzes the reduction of oxygen to water. Electrons originating from reduced cytochrome c in the intermembrane space (IMS) are transferred via the dinuclear copper A center (CU(A)) of subunit 2 and heme A of subunit 1 to the active site in subunit 1, a binuclear center (BNC) formed by heme A3 and copper B (CU(B)). The BNC reduces molecular oxygen to 2 water molecules using 4 electrons from cytochrome c in the IMS and 4 protons from the mitochondrial matrix. The polypeptide is Cytochrome c oxidase subunit 2 (MT-CO2) (Desmodillus auricularis (Cape short-eared gerbil)).